Reading from the N-terminus, the 283-residue chain is MGSEKEQRPEAHLPEEGEGAKPWRVDGSKDSQITPREDHGQESLLAGLHGTHPPKTRQKVTAQAGGPGDPMLFSSPETDEKLFICAQCGKTFNNTSNLRTHQRIHTGEKPYKCSECGKSFSRSSNRIRHERIHLEEKHYQCAKCQESFRRRSDLTTHQQDHLGQRPYRCDICGKSFTQSSTLAVHHRTHLEPAPYICCECGKSFSNSSSFGVHHRTHTGERPYECTECGRTFSDISNFGAHQRTHRGEKPYRCTLCGKHFSRSSNLIRHQKTHLGEQDEKDFS.

Over residues 1–41 the composition is skewed to basic and acidic residues; the sequence is MGSEKEQRPEAHLPEEGEGAKPWRVDGSKDSQITPREDHGQ. Positions 1–68 are disordered; sequence MGSEKEQRPE…KVTAQAGGPG (68 aa). Serine 43 is subject to Phosphoserine. Lysine 81 participates in a covalent cross-link: Glycyl lysine isopeptide (Lys-Gly) (interchain with G-Cter in SUMO2). 7 consecutive C2H2-type zinc fingers follow at residues 83 to 105, 111 to 133, 139 to 161, 167 to 189, 195 to 217, 223 to 245, and 251 to 273; these read FICA…QRIH, YKCS…ERIH, YQCA…QQDH, YRCD…HRTH, YICC…HRTH, YECT…QRTH, and YRCT…QKTH.

Belongs to the krueppel C2H2-type zinc-finger protein family.

Its subcellular location is the nucleus. Functionally, may be involved in transcriptional regulation. This is Zinc finger protein 691 (Znf691) from Mus musculus (Mouse).